The primary structure comprises 36 residues: Kappa-theraphotoxin-Pg1b (36 aa).

Cystine bridges form between Cys-4–Cys-19, Cys-11–Cys-24, and Cys-18–Cys-31.

The protein belongs to the neurotoxin 10 (Hwtx-1) family. 44 (Jztx-4) subfamily. In terms of tissue distribution, expressed by the venom gland.

The protein resides in the secreted. In terms of biological role, gating modifier of Kv2.1/KCNB1, Kv2.2/KCNB2 and Kv4.3/KCND3 channels. The chain is Kappa-theraphotoxin-Pg1b from Chilobrachys guangxiensis (Chinese earth tiger tarantula).